The primary structure comprises 103 residues: Small ribosomal subunit protein uS10 (103 aa).

Belongs to the universal ribosomal protein uS10 family. Part of the 30S ribosomal subunit.

Its function is as follows. Involved in the binding of tRNA to the ribosomes. The sequence is that of Small ribosomal subunit protein uS10 from Chlorobaculum parvum (strain DSM 263 / NCIMB 8327) (Chlorobium vibrioforme subsp. thiosulfatophilum).